Here is a 379-residue protein sequence, read N- to C-terminus: Chaperone protein DnaJ (379 aa).

One can recognise a J domain in the interval 5 to 70; sequence DYYEILEVSR…EKRAAYDRYG (66 aa). Residues 135–213 form a CR-type zinc finger; it reads GIKVPISYVT…CGGSGRVRNE (79 aa). Zn(2+)-binding residues include Cys148, Cys151, Cys165, Cys168, Cys187, Cys190, Cys201, and Cys204. CXXCXGXG motif repeat units follow at residues 148 to 155, 165 to 172, 187 to 194, and 201 to 208; these read CSSCSGIG, CGNCNGAG, CNVCNGEG, and CRRCGGSG.

Belongs to the DnaJ family. Homodimer. Requires Zn(2+) as cofactor.

The protein localises to the cytoplasm. In terms of biological role, participates actively in the response to hyperosmotic and heat shock by preventing the aggregation of stress-denatured proteins and by disaggregating proteins, also in an autonomous, DnaK-independent fashion. Unfolded proteins bind initially to DnaJ; upon interaction with the DnaJ-bound protein, DnaK hydrolyzes its bound ATP, resulting in the formation of a stable complex. GrpE releases ADP from DnaK; ATP binding to DnaK triggers the release of the substrate protein, thus completing the reaction cycle. Several rounds of ATP-dependent interactions between DnaJ, DnaK and GrpE are required for fully efficient folding. Also involved, together with DnaK and GrpE, in the DNA replication of plasmids through activation of initiation proteins. In Anaplasma marginale (strain Florida), this protein is Chaperone protein DnaJ.